Consider the following 322-residue polypeptide: MRDGIGKRAASALFLCGVLVMLAVSSAIVSSAMYILSFPGQASGITKEQVTKHMKKESFKQADIYYTSKEKSLLPLTKETLEYAVSINQIMIGYSNQKPIDIIFFPNEKQMEAYSGLLDVVGFYSEREQLIGLLPEEKKKLLEGDEVAVYLYQRLLIHEYSHHAFHQKLKELETDPDEFPLWFHEGLSEWIANYELLIDPITFSVVPFDRLQTDRDWQEARAEYDTDVYLQSFYMIDELTDKYGKDIISEMIKETAKKGDFEKGFKSATKESLDQFEKDFKKKFEKNSAALDSIYPMPLLLVKSLLTHSALCRRHLSLGRGE.

Residues 1–32 (MRDGIGKRAASALFLCGVLVMLAVSSAIVSSA) form the signal peptide.

This is an uncharacterized protein from Bacillus subtilis (strain 168).